Here is an 807-residue protein sequence, read N- to C-terminus: Glycerol-3-phosphate acyltransferase (807 aa).

An HXXXXD motif motif is present at residues 305-310 (CHRSHM).

The protein belongs to the GPAT/DAPAT family.

It localises to the cell inner membrane. The enzyme catalyses sn-glycerol 3-phosphate + an acyl-CoA = a 1-acyl-sn-glycero-3-phosphate + CoA. The protein operates within phospholipid metabolism; CDP-diacylglycerol biosynthesis; CDP-diacylglycerol from sn-glycerol 3-phosphate: step 1/3. The sequence is that of Glycerol-3-phosphate acyltransferase from Aliivibrio salmonicida (strain LFI1238) (Vibrio salmonicida (strain LFI1238)).